The primary structure comprises 549 residues: DNA mismatch repair protein MutL (549 aa).

The protein belongs to the DNA mismatch repair MutL/HexB family.

This protein is involved in the repair of mismatches in DNA. It is required for dam-dependent methyl-directed DNA mismatch repair. May act as a 'molecular matchmaker', a protein that promotes the formation of a stable complex between two or more DNA-binding proteins in an ATP-dependent manner without itself being part of a final effector complex. This chain is DNA mismatch repair protein MutL, found in Pseudothermotoga lettingae (strain ATCC BAA-301 / DSM 14385 / NBRC 107922 / TMO) (Thermotoga lettingae).